The chain runs to 508 residues: Probable ATP-dependent RNA helicase ddx49 (508 aa).

Residues 4–32 carry the Q motif motif; it reads KTFEELGLTTWLVANCKQLGFKAPSNIQA. In terms of domain architecture, Helicase ATP-binding spans 35-208; sequence IPEILKGRDI…SIALNKPFIF (174 aa). Residue 48 to 55 coordinates ATP; sequence AKTGSGKT. The DEAD box signature appears at 154 to 157; it reads DEAD. The 161-residue stretch at 219–379 folds into the Helicase C-terminal domain; it reads TLKQEYIYMP…LYKTDDDEVF (161 aa). A disordered region spans residues 422 to 476; sequence VNNKEKFENNNNDNNNNNKTKTTKPENKKEITKIQEQPSKSTTTTKSIEKKPTTI. Residues 430–441 are compositionally biased toward low complexity; sequence NNNNDNNNNNKT. The segment covering 444–454 has biased composition (basic and acidic residues); the sequence is TKPENKKEITK.

This sequence belongs to the DEAD box helicase family. DDX49/DBP8 subfamily.

It carries out the reaction ATP + H2O = ADP + phosphate + H(+). Functionally, probable ATP-binding RNA helicase. In Dictyostelium discoideum (Social amoeba), this protein is Probable ATP-dependent RNA helicase ddx49 (ddx49).